Here is a 166-residue protein sequence, read N- to C-terminus: Lipoprotein signal peptidase (166 aa).

3 helical membrane-spanning segments follow: residues Trp-12–Gln-32, Trp-70–Ser-90, and Ala-102–Val-122. Residues Asp-123 and Asp-141 contribute to the active site. Residues Phe-137 to Leu-157 traverse the membrane as a helical segment.

The protein belongs to the peptidase A8 family.

It localises to the cell inner membrane. The enzyme catalyses Release of signal peptides from bacterial membrane prolipoproteins. Hydrolyzes -Xaa-Yaa-Zaa-|-(S,diacylglyceryl)Cys-, in which Xaa is hydrophobic (preferably Leu), and Yaa (Ala or Ser) and Zaa (Gly or Ala) have small, neutral side chains.. It participates in protein modification; lipoprotein biosynthesis (signal peptide cleavage). Functionally, this protein specifically catalyzes the removal of signal peptides from prolipoproteins. This Salmonella agona (strain SL483) protein is Lipoprotein signal peptidase.